Reading from the N-terminus, the 499-residue chain is Potassium voltage-gated channel subfamily A member 2 (499 aa).

A disordered region spans residues 1-26 (MTVATEDPADEAAALPGHPQDTYDPE). Residues 1–125 (MTVATEDPAD…YELGEEAMEM (125 aa)) are tetramerization domain. Residues 1-160 (MTVATEDPAD…LLFEYPESSG (160 aa)) lie on the Cytoplasmic side of the membrane. The chain crosses the membrane as a helical span at residues 161-182 (PARIIAIVSVMVILISIVSFCL). Residues 183-221 (ETLPIFRDENEDMHGSGMTFHTYSNSTAGYQQSTSFTDP) are Extracellular-facing. Asn-207 carries N-linked (GlcNAc...) asparagine glycosylation. A helical transmembrane segment spans residues 222 to 243 (FFIVETLCIIWFSFEFLVRFFA). Cys-244 carries S-palmitoyl cysteine lipidation. The Cytoplasmic portion of the chain corresponds to 244 to 254 (CPSKAGFFTNI). A helical membrane pass occupies residues 255 to 275 (MNIIDIVAIIPYFITLGTELA). The Extracellular portion of the chain corresponds to 276–289 (EKPEDAQQGQQAMS). Residues 290 to 310 (LAILRVIRLVRVFRIFKLSRH) form a helical; Voltage-sensor membrane-spanning segment. At 311-325 (SKGLQILGQTLKASM) the chain is on the cytoplasmic side. The segment at 312–325 (KGLQILGQTLKASM) is S4-S5 linker. A helical membrane pass occupies residues 326-347 (RELGLLIFFLFIGVILFSSAVY). Topologically, residues 348–361 (FAEADERDSQFPSI) are extracellular. An intramembrane region (helical) is located at residues 362-373 (PDAFWWAVVSMT). Positions 374–379 (TVGYGD) match the Selectivity filter motif. An intramembrane segment occupies 374–381 (TVGYGDMV). Residues 382–388 (PTTIGGK) lie on the Extracellular side of the membrane. A helical transmembrane segment spans residues 389–417 (IVGSLCAIAGVLTIALPVPVIVSNFNYFY). Topologically, residues 418–499 (HRETEGEEQA…VNITKMLTDV (82 aa)) are cytoplasmic. Position 429 is a phosphotyrosine (Tyr-429). Residues Ser-434, Ser-440, Ser-441, and Ser-449 each carry the phosphoserine modification. Phosphotyrosine is present on Tyr-458. At Ser-468 the chain carries Phosphoserine. The short motif at 497 to 499 (TDV) is the PDZ-binding element.

Belongs to the potassium channel family. A (Shaker) (TC 1.A.1.2) subfamily. Kv1.2/KCNA2 sub-subfamily. In terms of assembly, homotetramer and heterotetramer with other channel-forming alpha subunits, such as KCNA1, KCNA4, KCNA5, KCNA6 and KCNA7. Channel activity is regulated by interaction with the beta subunits, including KCNAB1 and KCNAB2. Identified in a complex with KCNA1 and KCNAB2. Identified in a complex with KCNA4 and FYN. Identified in a complex with KCNA5 and KCNAB1. Interacts with the beta subunit KCNAB1. Interacts with PTK2B. Interacts (via C-terminus) with CTTN. Interacts (via N-terminal cytoplasmic domain) with RHOA (GTP-bound form); this regulates channel activity by reducing location at the cell surface in response to CHRM1 activation. Interacts with DRD2. Interacts with SIGMAR1; cocaine consumption leads to increased interaction. Interacts with ADAM22. Interacts with CNTNAP2. Interacts (via C-terminus) with the PDZ domains of DLG1, DLG2 and DLG4. Interacts with ADAM11. Interacts with LYNX1. Phosphorylated on tyrosine residues; phosphorylation increases in response to ischemia. Phosphorylated on tyrosine residues by activated PTK2B/PYK2. Phosphorylation on tyrosine residues suppresses ion channel activity. Phosphorylated on tyrosine residues in response to CHRM1 activation; this abolishes interaction with CTTN. This is probably due to endocytosis of the phosphorylated channel subunits. Phosphorylated on serine residues in response to increased cAMP levels; phosphorylation is apparently not catalyzed by PKA. In terms of processing, N-glycosylated, with complex, sialylated N-glycans. Detected in portal vein myocytes (at protein level). Detected in portal vein. Brain, liver and kidney.

It localises to the cell membrane. The protein resides in the membrane. It is found in the cell projection. The protein localises to the axon. Its subcellular location is the synapse. It localises to the presynaptic cell membrane. The protein resides in the synaptosome. It is found in the endoplasmic reticulum membrane. The protein localises to the dendrite. Its subcellular location is the lamellipodium membrane. It localises to the cell junction. The protein resides in the paranodal septate junction. The enzyme catalyses K(+)(in) = K(+)(out). With respect to regulation, inhibited by 4-aminopyridine (4-AP). Inhibited by dendrotoxin (DTX) and charybdotoxin (CTX), but not by tetraethylammonium (TEA). Inhibited by tityustoxin-K alpha (TsTX-Kalpha), a toxin that is highly specific for KCNA2. Inhibited by maurotoxin. Inhibited by kappaM conotoxins kappaM-RIIIJ and kappaM-RIIIK. Voltage-gated potassium channel that mediates transmembrane potassium transport in excitable membranes, primarily in the brain and the central nervous system, but also in the cardiovascular system. Prevents aberrant action potential firing and regulates neuronal output. Forms tetrameric potassium-selective channels through which potassium ions pass in accordance with their electrochemical gradient. The channel alternates between opened and closed conformations in response to the voltage difference across the membrane. Can form functional homotetrameric channels and heterotetrameric channels that contain variable proportions of KCNA1, KCNA2, KCNA4, KCNA5, KCNA6, KCNA7, and possibly other family members as well; channel properties depend on the type of alpha subunits that are part of the channel. Channel properties are modulated by cytoplasmic beta subunits that regulate the subcellular location of the alpha subunits and promote rapid inactivation of delayed rectifier potassium channels. In vivo, membranes probably contain a mixture of heteromeric potassium channel complexes, making it difficult to assign currents observed in intact tissues to any particular potassium channel family member. Homotetrameric KCNA2 forms a delayed-rectifier potassium channel that opens in response to membrane depolarization, followed by slow spontaneous channel closure. In contrast, a heteromultimer formed by KCNA2 and KCNA4 shows rapid inactivation. Regulates neuronal excitability and plays a role as pacemaker in the regulation of neuronal action potentials. KCNA2-containing channels play a presynaptic role and prevent hyperexcitability and aberrant action potential firing. Response to toxins that are selective for KCNA2-containing potassium channels suggests that in Purkinje cells, dendritic subthreshold KCNA2-containing potassium channels prevent random spontaneous calcium spikes, suppressing dendritic hyperexcitability without hindering the generation of somatic action potentials, and thereby play an important role in motor coordination. Plays a role in the induction of long-term potentiation of neuron excitability in the CA3 layer of the hippocampus. May function as down-stream effector for G protein-coupled receptors and inhibit GABAergic inputs to basolateral amygdala neurons. May contribute to the regulation of neurotransmitter release, such as gamma-aminobutyric acid (GABA). Contributes to the regulation of the axonal release of the neurotransmitter dopamine. Reduced KCNA2 expression plays a role in the perception of neuropathic pain after peripheral nerve injury, but not acute pain. Plays a role in the regulation of the time spent in non-rapid eye movement (NREM) sleep. The protein is Potassium voltage-gated channel subfamily A member 2 (KCNA2) of Oryctolagus cuniculus (Rabbit).